Here is a 178-residue protein sequence, read N- to C-terminus: Endothelin-2 (178 aa).

The first 24 residues, 1 to 24 (MVSVPTTWCSVALALLVALHEGKG), serve as a signal peptide directing secretion. Positions 25 to 46 (QAAATLEQPASSSHAQGTHLRL) are excised as a propeptide. 2 disulfides stabilise this stretch: C49–C63 and C51–C59. Positions 70-178 (VNTPEQTAPY…RSTHSRWRKR (109 aa)) are excised as a propeptide. Positions 96–111 (CQCSSARDPACATFCL) are endothelin-like. The interval 159–178 (KRQQEAMREPRSTHSRWRKR) is disordered. Basic and acidic residues predominate over residues 160 to 170 (RQQEAMREPRS).

This sequence belongs to the endothelin/sarafotoxin family. Expressed in lung, but not in placental stem villi vessels or cultured placental villi smooth muscle cells.

Its subcellular location is the secreted. Endothelins are endothelium-derived vasoconstrictor peptides. This is Endothelin-2 (EDN2) from Homo sapiens (Human).